Here is a 78-residue protein sequence, read N- to C-terminus: Translational regulator CsrA (78 aa).

It belongs to the CsrA/RsmA family. In terms of assembly, homodimer; the beta-strands of each monomer intercalate to form a hydrophobic core, while the alpha-helices form wings that extend away from the core.

The protein resides in the cytoplasm. A translational regulator that binds mRNA to regulate translation initiation and/or mRNA stability. Usually binds in the 5'-UTR at or near the Shine-Dalgarno sequence preventing ribosome-binding, thus repressing translation. Its main target seems to be the major flagellin gene, while its function is anatagonized by FliW. The chain is Translational regulator CsrA from Caldicellulosiruptor bescii (strain ATCC BAA-1888 / DSM 6725 / KCTC 15123 / Z-1320) (Anaerocellum thermophilum).